The primary structure comprises 642 residues: LIM domain kinase 2 (642 aa).

LIM zinc-binding domains are found at residues 12 to 63 and 72 to 124; these read CLGC…CHKD and CHGC…CGKC. Residues 152–239 enclose the PDZ domain; it reads LISMPAATDG…TLQLLIEHDP (88 aa). The segment at 282-304 is disordered; it reads RSLRRSNSISKSPGPSSPKEPLL. The segment covering 286 to 304 has biased composition (low complexity); the sequence is RSNSISKSPGPSSPKEPLL. The Protein kinase domain maps to 331–608; that stretch reads LIHGEVLGKG…DSFEALSLYL (278 aa). ATP-binding positions include 337–345 and lysine 360; that span reads LGKGFFGQA. Aspartate 451 is an active-site residue. At threonine 505 the chain carries Phosphothreonine.

The protein belongs to the protein kinase superfamily. TKL Ser/Thr protein kinase family. In terms of assembly, binds ROCK1 and LKAP. Expressed predominantly in the lung, and faintly in the kidney, liver, brain, spleen, gizzard, and intestine.

It localises to the cytoplasm. The protein localises to the cytoskeleton. Its subcellular location is the spindle. The protein resides in the microtubule organizing center. It is found in the centrosome. The enzyme catalyses L-seryl-[protein] + ATP = O-phospho-L-seryl-[protein] + ADP + H(+). It catalyses the reaction L-threonyl-[protein] + ATP = O-phospho-L-threonyl-[protein] + ADP + H(+). Serine/threonine-protein kinase that plays an essential role in the regulation of actin filament dynamics. Acts downstream of several Rho family GTPase signal transduction pathways. Involved in astral microtubule organization and mitotic spindle orientation during early stages of mitosis by mediating phosphorylation of TPPP. This chain is LIM domain kinase 2 (LIMK2), found in Gallus gallus (Chicken).